A 166-amino-acid chain; its full sequence is Prorelaxin H1 (166 aa).

The N-terminal stretch at 1–5 is a signal peptide; the sequence is SRAVA. Disulfide bonds link cysteine 16/cysteine 153, cysteine 28/cysteine 166, and cysteine 152/cysteine 157. Positions 37 to 139 are cleaved as a propeptide — connecting peptide; sequence SLSQEDAPQT…KYLGLDTHSQ (103 aa).

This sequence belongs to the insulin family. Heterodimer of a B chain and an A chain linked by two disulfide bonds. Expressed in the corpus luteum of pregnancy but not in the placenta.

It is found in the secreted. Functionally, relaxin is an ovarian hormone that acts with estrogen to produce dilatation of the birth canal in many mammals. May be involved in remodeling of connective tissues during pregnancy, promoting growth of pubic ligaments and ripening of the cervix. The sequence is that of Prorelaxin H1 (RNL1) from Pan troglodytes (Chimpanzee).